We begin with the raw amino-acid sequence, 88 residues long: LYR motif-containing protein 2 (88 aa).

A mitochondrion-targeting transit peptide spans 1 to 19 (MAASRLPPATLTLKQFVRR).

This sequence belongs to the complex I LYR family.

The protein localises to the mitochondrion. In terms of biological role, involved in efficient integration of the N-module into mitochondrial respiratory chain complex I. The polypeptide is LYR motif-containing protein 2 (LYRM2) (Pongo abelii (Sumatran orangutan)).